The following is an 896-amino-acid chain: FHIP family protein C05D11.8 (896 aa).

The segment at 823–865 is disordered; sequence STASSPRTSDDHDPTLFYGRSTMAPPGRKPLLREPSRQETLDD. Over residues 853-865 the composition is skewed to basic and acidic residues; that stretch reads LLREPSRQETLDD.

Belongs to the FHIP family.

This is FHIP family protein C05D11.8 from Caenorhabditis elegans.